Here is a 478-residue protein sequence, read N- to C-terminus: Glutamate--tRNA ligase (478 aa).

The short motif at 9–19 (PSPTGLLHIGT) is the 'HIGH' region element. The 'KMSKS' region motif lies at 248–252 (KLSKR). Lysine 251 contributes to the ATP binding site.

The protein belongs to the class-I aminoacyl-tRNA synthetase family. Glutamate--tRNA ligase type 1 subfamily. Monomer.

Its subcellular location is the cytoplasm. The catalysed reaction is tRNA(Glu) + L-glutamate + ATP = L-glutamyl-tRNA(Glu) + AMP + diphosphate. In terms of biological role, catalyzes the attachment of glutamate to tRNA(Glu) in a two-step reaction: glutamate is first activated by ATP to form Glu-AMP and then transferred to the acceptor end of tRNA(Glu). This chain is Glutamate--tRNA ligase, found in Prochlorococcus marinus (strain MIT 9515).